The following is a 1430-amino-acid chain: DNA-directed RNA polymerase subunit beta' (1430 aa).

Residues cysteine 71, cysteine 73, cysteine 86, and cysteine 89 each coordinate Zn(2+). Mg(2+) is bound by residues aspartate 461, aspartate 463, and aspartate 465. Zn(2+) is bound by residues cysteine 815, cysteine 889, cysteine 896, and cysteine 899. The segment at 1388–1430 (RRQEAPAPAATPEQQAEEVFASLGQGEGEGPSPSDEASGPEVE) is disordered. The segment covering 1392 to 1405 (APAPAATPEQQAEE) has biased composition (low complexity).

This sequence belongs to the RNA polymerase beta' chain family. In terms of assembly, the RNAP catalytic core consists of 2 alpha, 1 beta, 1 beta' and 1 omega subunit. When a sigma factor is associated with the core the holoenzyme is formed, which can initiate transcription. Requires Mg(2+) as cofactor. The cofactor is Zn(2+).

It catalyses the reaction RNA(n) + a ribonucleoside 5'-triphosphate = RNA(n+1) + diphosphate. DNA-dependent RNA polymerase catalyzes the transcription of DNA into RNA using the four ribonucleoside triphosphates as substrates. The protein is DNA-directed RNA polymerase subunit beta' of Halorhodospira halophila (strain DSM 244 / SL1) (Ectothiorhodospira halophila (strain DSM 244 / SL1)).